The chain runs to 312 residues: Tyrosine recombinase XerC (312 aa).

Positions M1 to I103 constitute a Core-binding (CB) domain. One can recognise a Tyr recombinase domain in the interval E124–E306. Residues R164, K188, H258, R261, and H284 contribute to the active site. Y293 acts as the O-(3'-phospho-DNA)-tyrosine intermediate in catalysis.

The protein belongs to the 'phage' integrase family. XerC subfamily. As to quaternary structure, forms a cyclic heterotetrameric complex composed of two molecules of XerC and two molecules of XerD.

The protein localises to the cytoplasm. In terms of biological role, site-specific tyrosine recombinase, which acts by catalyzing the cutting and rejoining of the recombining DNA molecules. The XerC-XerD complex is essential to convert dimers of the bacterial chromosome into monomers to permit their segregation at cell division. It also contributes to the segregational stability of plasmids. In Chlamydia caviae (strain ATCC VR-813 / DSM 19441 / 03DC25 / GPIC) (Chlamydophila caviae), this protein is Tyrosine recombinase XerC.